Consider the following 98-residue polypeptide: Co-chaperonin GroES (98 aa).

This sequence belongs to the GroES chaperonin family. As to quaternary structure, heptamer of 7 subunits arranged in a ring. Interacts with the chaperonin GroEL.

It is found in the cytoplasm. Together with the chaperonin GroEL, plays an essential role in assisting protein folding. The GroEL-GroES system forms a nano-cage that allows encapsulation of the non-native substrate proteins and provides a physical environment optimized to promote and accelerate protein folding. GroES binds to the apical surface of the GroEL ring, thereby capping the opening of the GroEL channel. This is Co-chaperonin GroES from Rhizobium leguminosarum bv. trifolii (strain WSM2304).